Here is a 118-residue protein sequence, read N- to C-terminus: Non-specific lipid-transfer protein (118 aa).

An N-terminal signal peptide occupies residues 1 to 27; sequence MGVSKVAIAVAVMLMVVVINHPAVVEG. Intrachain disulfides connect C30/C75, C40/C54, C55/C100, and C77/C114.

This sequence belongs to the plant LTP family. In terms of processing, disulfide bonds.

Plant non-specific lipid-transfer proteins transfer phospholipids as well as galactolipids across membranes. May play a role in wax or cutin deposition in the cell walls of expanding epidermal cells and certain secretory tissues. The protein is Non-specific lipid-transfer protein of Apium graveolens (Celery).